The primary structure comprises 369 residues: Nuclear pore complex-interacting protein family member A7 (369 aa).

Residues 151–171 form a disordered region; it reads SMKEREHREEERQVSEAEENG.

Belongs to the NPIP family.

This is Nuclear pore complex-interacting protein family member A7 (NPIPA7) from Homo sapiens (Human).